Consider the following 198-residue polypeptide: Imidazoleglycerol-phosphate dehydratase (198 aa).

It belongs to the imidazoleglycerol-phosphate dehydratase family.

It localises to the cytoplasm. The enzyme catalyses D-erythro-1-(imidazol-4-yl)glycerol 3-phosphate = 3-(imidazol-4-yl)-2-oxopropyl phosphate + H2O. It functions in the pathway amino-acid biosynthesis; L-histidine biosynthesis; L-histidine from 5-phospho-alpha-D-ribose 1-diphosphate: step 6/9. The chain is Imidazoleglycerol-phosphate dehydratase from Gluconacetobacter diazotrophicus (strain ATCC 49037 / DSM 5601 / CCUG 37298 / CIP 103539 / LMG 7603 / PAl5).